A 153-amino-acid chain; its full sequence is Large ribosomal subunit protein uL13 (153 aa).

The interval 128–153 (SEHPHEAQSPEVLDVTSMNSKNTRSA) is disordered. Over residues 143–153 (TSMNSKNTRSA) the composition is skewed to polar residues.

The protein belongs to the universal ribosomal protein uL13 family. As to quaternary structure, part of the 50S ribosomal subunit.

In terms of biological role, this protein is one of the early assembly proteins of the 50S ribosomal subunit, although it is not seen to bind rRNA by itself. It is important during the early stages of 50S assembly. The polypeptide is Large ribosomal subunit protein uL13 (Roseobacter denitrificans (strain ATCC 33942 / OCh 114) (Erythrobacter sp. (strain OCh 114))).